Consider the following 346-residue polypeptide: Acetylpolyamine amidohydrolase 1 (346 aa).

His-161 serves as the catalytic Proton donor/acceptor. Positions 197, 199, and 286 each coordinate Zn(2+).

Belongs to the histone deacetylase family. In terms of assembly, homodimer. It depends on Zn(2+) as a cofactor.

It catalyses the reaction N-acetylputrescine + H2O = putrescine + acetate. The catalysed reaction is N-acetylcadaverine + H2O = cadaverine + acetate. It carries out the reaction N(1)-acetylspermine + H2O = spermine + acetate. The enzyme catalyses N(1)-acetylspermidine + H2O = spermidine + acetate. The protein operates within amine and polyamine metabolism. In terms of biological role, catalyzes the deacetylation of acetylated polyamines such as N-acetylputrescine, N-acetylcadaverine, N(1)-acetylspermine and N(1)-acetylspermidine. Plays an important role in the metabolism of acetylated polyamines in P.aeruginosa. Is involved in the degradation pathways of N-acetylputrescine and N-acetylcadaverine, that allow P.aeruginosa to utilize these acetylpolyamines as a carbon source under glucose starvation. In vitro, can also hydrolyze artificial trifluoroacetylated and acetylated lysine-derivatives. This Pseudomonas aeruginosa (strain ATCC 15692 / DSM 22644 / CIP 104116 / JCM 14847 / LMG 12228 / 1C / PRS 101 / PAO1) protein is Acetylpolyamine amidohydrolase 1.